The primary structure comprises 374 residues: Guanine nucleotide-binding protein subunit alpha-15 (374 aa).

A G-alpha domain is found at 41–374; it reads GELKLLLLGP…ARYLDEINLL (334 aa). The interval 44 to 57 is G1 motif; the sequence is KLLLLGPGESGKST. Residues 49 to 56, 183 to 189, 208 to 212, 277 to 280, and Ala346 contribute to the GTP site; these read GPGESGKS, LRSRMPT, DVGGQ, and NKTD. Ser56 provides a ligand contact to Mg(2+). The tract at residues 181 to 189 is G2 motif; sequence DVLRSRMPT. Residue Arg186 is modified to ADP-ribosylarginine; by cholera toxin. Thr189 serves as a coordination point for Mg(2+). The segment at 204-213 is G3 motif; the sequence is LRIVDVGGQK. Residues 273 to 280 are G4 motif; sequence ILFLNKTD. A G5 motif region spans residues 344 to 349; it reads TCATDT.

It belongs to the G-alpha family. G(q) subfamily. G proteins are composed of 3 units; alpha, beta and gamma. The alpha chain contains the guanine nucleotide binding site. Specifically expressed in hematopoietic cells. Expressed in epididymis (at protein level).

In terms of biological role, guanine nucleotide-binding proteins (G proteins) are involved as modulators or transducers in various transmembrane signaling systems. This is Guanine nucleotide-binding protein subunit alpha-15 (GNA15) from Homo sapiens (Human).